The following is a 199-amino-acid chain: WASH complex subunit 3 (199 aa).

The stretch at 47–76 forms a coiled coil; that stretch reads VCEEKLSALSLRIQQIETTLNILEAKLSSI. Residues 93-120 show a composition bias toward polar residues; the sequence is NISNGHLPSQPDAQSVVVSPQSDNNSMN. Disordered regions lie at residues 93-136 and 170-199; these read NISN…NITT and PDLLETPDAPVPDGEPEAEESSDSESSFSD. A compositionally biased stretch (acidic residues) spans 183–192; it reads GEPEAEESSD.

The protein belongs to the CCDC53 family. As to quaternary structure, component of the WASH complex.

The sequence is that of WASH complex subunit 3 from Xenopus laevis (African clawed frog).